The sequence spans 257 residues: DNA repair protein RecO (257 aa).

Belongs to the RecO family.

Its function is as follows. Involved in DNA repair and RecF pathway recombination. This is DNA repair protein RecO from Synechococcus sp. (strain CC9605).